The following is a 312-amino-acid chain: Malate dehydrogenase (312 aa).

NAD(+)-binding positions include 7 to 13 (GAAGGIG) and D34. Residues R81 and R87 each coordinate substrate. Residues N94 and 117-119 (ITN) each bind NAD(+). 2 residues coordinate substrate: N119 and R153. The active-site Proton acceptor is the H177. M227 contributes to the NAD(+) binding site.

The protein belongs to the LDH/MDH superfamily. MDH type 1 family. As to quaternary structure, homodimer.

It catalyses the reaction (S)-malate + NAD(+) = oxaloacetate + NADH + H(+). Functionally, catalyzes the reversible oxidation of malate to oxaloacetate. This is Malate dehydrogenase from Escherichia coli (strain ATCC 8739 / DSM 1576 / NBRC 3972 / NCIMB 8545 / WDCM 00012 / Crooks).